We begin with the raw amino-acid sequence, 209 residues long: Ribosomal RNA large subunit methyltransferase E (209 aa).

S-adenosyl-L-methionine contacts are provided by glycine 63, tryptophan 65, aspartate 83, aspartate 99, and aspartate 124. The Proton acceptor role is filled by lysine 164.

The protein belongs to the class I-like SAM-binding methyltransferase superfamily. RNA methyltransferase RlmE family.

It is found in the cytoplasm. It catalyses the reaction uridine(2552) in 23S rRNA + S-adenosyl-L-methionine = 2'-O-methyluridine(2552) in 23S rRNA + S-adenosyl-L-homocysteine + H(+). In terms of biological role, specifically methylates the uridine in position 2552 of 23S rRNA at the 2'-O position of the ribose in the fully assembled 50S ribosomal subunit. This Aliivibrio salmonicida (strain LFI1238) (Vibrio salmonicida (strain LFI1238)) protein is Ribosomal RNA large subunit methyltransferase E.